The chain runs to 192 residues: Protein A16 (192 aa).

Positions M1–G22 are cleaved as a signal peptide. Residues K71–Y186 form the C-type lectin domain. A disulfide bridge links C163 with C177.

As to expression, expressed in the gut of adults.

The polypeptide is Protein A16 (CTL3) (Anopheles gambiae (African malaria mosquito)).